The sequence spans 166 residues: MNYTSFILAFQLCAILGSSTYYCQAAFFKEIENLKEYFNASSPDVGDGGPLFLDILKNWKEDSDKKIIQSQIVSFYFKLFENLKDNQVIQKSMDTIKEDLFVKFFNSSTSKLEDFQKLIQIPVNDLKVQRKAISELIKVMNDLSPKANLRKRKRSQNPFRGRRALQ.

The N-terminal stretch at 1 to 23 is a signal peptide; that stretch reads MNYTSFILAFQLCAILGSSTYYC. Glutamine 24 is modified (pyrrolidone carboxylic acid). Residues asparagine 39 and asparagine 106 are each glycosylated (N-linked (GlcNAc...) asparagine). A disordered region spans residues 147–166; sequence ANLRKRKRSQNPFRGRRALQ. The span at 148–166 shows a compositional bias: basic residues; that stretch reads NLRKRKRSQNPFRGRRALQ.

It belongs to the type II (or gamma) interferon family. Homodimer. Interacts with IFNGR1 (via extracellular domain); this interaction promotes IFNGR1 dimerization. In terms of tissue distribution, released primarily from activated T lymphocytes.

It is found in the secreted. Type II interferon produced by immune cells such as T-cells and NK cells that plays crucial roles in antimicrobial, antiviral, and antitumor responses by activating effector immune cells and enhancing antigen presentation. Primarily signals through the JAK-STAT pathway after interaction with its receptor IFNGR1 to affect gene regulation. Upon IFNG binding, IFNGR1 intracellular domain opens out to allow association of downstream signaling components JAK2, JAK1 and STAT1, leading to STAT1 activation, nuclear translocation and transcription of IFNG-regulated genes. Many of the induced genes are transcription factors such as IRF1 that are able to further drive regulation of a next wave of transcription. Plays a role in class I antigen presentation pathway by inducing a replacement of catalytic proteasome subunits with immunoproteasome subunits. In turn, increases the quantity, quality, and repertoire of peptides for class I MHC loading. Increases the efficiency of peptide generation also by inducing the expression of activator PA28 that associates with the proteasome and alters its proteolytic cleavage preference. Up-regulates as well MHC II complexes on the cell surface by promoting expression of several key molecules such as cathepsins B/CTSB, H/CTSH, and L/CTSL. Participates in the regulation of hematopoietic stem cells during development and under homeostatic conditions by affecting their development, quiescence, and differentiation. This is Interferon gamma (IFNG) from Equus asinus (Donkey).